The sequence spans 609 residues: DNA mismatch repair protein MutL (609 aa).

The protein belongs to the DNA mismatch repair MutL/HexB family.

In terms of biological role, this protein is involved in the repair of mismatches in DNA. It is required for dam-dependent methyl-directed DNA mismatch repair. May act as a 'molecular matchmaker', a protein that promotes the formation of a stable complex between two or more DNA-binding proteins in an ATP-dependent manner without itself being part of a final effector complex. This chain is DNA mismatch repair protein MutL, found in Rickettsia felis (strain ATCC VR-1525 / URRWXCal2) (Rickettsia azadi).